The chain runs to 269 residues: 5'-nucleotidase SurE (269 aa).

Aspartate 11, aspartate 12, serine 43, and asparagine 101 together coordinate a divalent metal cation.

This sequence belongs to the SurE nucleotidase family. It depends on a divalent metal cation as a cofactor.

The protein resides in the cytoplasm. The catalysed reaction is a ribonucleoside 5'-phosphate + H2O = a ribonucleoside + phosphate. Functionally, nucleotidase that shows phosphatase activity on nucleoside 5'-monophosphates. This chain is 5'-nucleotidase SurE, found in Prochlorococcus marinus (strain MIT 9211).